The chain runs to 118 residues: Large ribosomal subunit protein uL18 (118 aa).

The segment at 1 to 24 is disordered; that stretch reads MITKPDKNKIRQKRHRRVRGKLSG. A compositionally biased stretch (basic residues) spans 10–20; the sequence is IRQKRHRRVRG.

Belongs to the universal ribosomal protein uL18 family. Part of the 50S ribosomal subunit; part of the 5S rRNA/L5/L18/L25 subcomplex. Contacts the 5S and 23S rRNAs.

In terms of biological role, this is one of the proteins that bind and probably mediate the attachment of the 5S RNA into the large ribosomal subunit, where it forms part of the central protuberance. In Streptococcus sanguinis (strain SK36), this protein is Large ribosomal subunit protein uL18.